A 269-amino-acid chain; its full sequence is Troponin T, fast skeletal muscle (269 aa).

Residues 1–23 show a composition bias toward acidic residues; sequence MSDEEVEQVEEQYEEEEEAQEEA. The interval 1 to 72 is disordered; it reads MSDEEVEQVE…EKVDFDDIQK (72 aa). Ser2 carries the post-translational modification N-acetylserine. Residue Ser2 is modified to Phosphoserine. Residues 24-34 show a composition bias toward basic and acidic residues; the sequence is AEVHEEVHEPE. Acidic residues predominate over residues 35 to 47; it reads EVQEDTAEEDAEE. Residues 60-72 show a composition bias toward basic and acidic residues; it reads PEGEKVDFDDIQK. Phosphoserine is present on Ser88. The segment covering 111-153 has biased composition (basic and acidic residues); it reads RAERAEQQRIRAEKERERQNRLAEEKARREEEDAKRRAEDDLK. The interval 111-158 is disordered; it reads RAERAEQQRIRAEKERERQNRLAEEKARREEEDAKRRAEDDLKKKKAL. Ser159, Ser166, and Ser167 each carry phosphoserine. A disordered region spans residues 245–269; the sequence is RIDQAQKHSKKAGTPAKGKVGGRWK.

It belongs to the troponin T family. In terms of tissue distribution, in fetal and adult fast skeletal muscles, with a higher level expression in fetal than in adult muscle.

Its function is as follows. Troponin T is the tropomyosin-binding subunit of troponin, the thin filament regulatory complex which confers calcium-sensitivity to striated muscle actomyosin ATPase activity. The protein is Troponin T, fast skeletal muscle (TNNT3) of Homo sapiens (Human).